The following is a 474-amino-acid chain: tRNA-2-methylthio-N(6)-dimethylallyladenosine synthase (474 aa).

The MTTase N-terminal domain maps to 3 to 120 (KKLHIKTWGC…LPEMINQVKG (118 aa)). The [4Fe-4S] cluster site is built by Cys12, Cys49, Cys83, Cys157, Cys161, and Cys164. Positions 143–375 (RAEGPTAFVS…QERINQQAMA (233 aa)) constitute a Radical SAM core domain. One can recognise a TRAM domain in the interval 378 to 441 (RRMLGTTQRI…PNSLRGKVIR (64 aa)).

This sequence belongs to the methylthiotransferase family. MiaB subfamily. In terms of assembly, monomer. It depends on [4Fe-4S] cluster as a cofactor.

Its subcellular location is the cytoplasm. It catalyses the reaction N(6)-dimethylallyladenosine(37) in tRNA + (sulfur carrier)-SH + AH2 + 2 S-adenosyl-L-methionine = 2-methylsulfanyl-N(6)-dimethylallyladenosine(37) in tRNA + (sulfur carrier)-H + 5'-deoxyadenosine + L-methionine + A + S-adenosyl-L-homocysteine + 2 H(+). Its function is as follows. Catalyzes the methylthiolation of N6-(dimethylallyl)adenosine (i(6)A), leading to the formation of 2-methylthio-N6-(dimethylallyl)adenosine (ms(2)i(6)A) at position 37 in tRNAs that read codons beginning with uridine. This is tRNA-2-methylthio-N(6)-dimethylallyladenosine synthase from Cronobacter sakazakii (strain ATCC BAA-894) (Enterobacter sakazakii).